Consider the following 318-residue polypeptide: Large ribosomal subunit protein uL10 (318 aa).

Phosphotyrosine is present on Tyr24. Position 59 is a phosphothreonine (Thr59). A Glycyl lysine isopeptide (Lys-Gly) (interchain with G-Cter in ubiquitin) cross-link involves residue Lys264. The segment at 293 to 318 (TAAPAKVEAKEESEESDEDMGFGLFD) is disordered. Residue Lys298 forms a Glycyl lysine isopeptide (Lys-Gly) (interchain with G-Cter in SUMO1); alternate linkage. Lys298 participates in a covalent cross-link: Glycyl lysine isopeptide (Lys-Gly) (interchain with G-Cter in SUMO2); alternate. Positions 303-312 (EESEESDEDM) are enriched in acidic residues. 2 positions are modified to phosphoserine: Ser305 and Ser308.

It belongs to the universal ribosomal protein uL10 family. As to quaternary structure, P0 forms a pentameric complex by interaction with dimers of P1 and P2. Identified in a IGF2BP1-dependent mRNP granule complex containing untranslated mRNAs. Interacts with APEX1. Interacts with FMR1. In terms of processing, ubiquitinated at Lys-264 by RNF14 and RNF25 in response to ribosome collisions (ribosome stalling).

The protein localises to the nucleus. It localises to the cytoplasm. Its function is as follows. Ribosomal protein P0 is the functional equivalent of E.coli protein L10. The protein is Large ribosomal subunit protein uL10 (RPLP0) of Bos taurus (Bovine).